A 179-amino-acid chain; its full sequence is Putative 5'(3')-deoxyribonucleotidase (179 aa).

The active-site Nucleophile is aspartate 9. Mg(2+) is bound by residues aspartate 9, aspartate 11, and aspartate 135. Aspartate 11 functions as the Proton donor in the catalytic mechanism.

Belongs to the 5'(3')-deoxyribonucleotidase family. Mg(2+) is required as a cofactor.

In terms of biological role, dephosphorylates the 5' and 2'(3')-phosphates of deoxyribonucleotides. The chain is Putative 5'(3')-deoxyribonucleotidase from Staphylococcus epidermidis (strain ATCC 12228 / FDA PCI 1200).